The primary structure comprises 735 residues: Dolichyl-diphosphooligosaccharide--protein glycosyltransferase subunit STT3B (735 aa).

Topologically, residues 1–38 (MGGKSEPAKSESMATKPDLLNTSFFSFKSLKLKTKQQE) are cytoplasmic. A helical membrane pass occupies residues 39–59 (LLLRISILGLVYILAFIARLF). Residues 60 to 142 (SVLRYESMIH…VHIREVCVLT (83 aa)) lie on the Lumenal side of the membrane. The DXD motif 1 motif lies at 70-72 (EFD). D72 is a binding site for Mn(2+). Residues 143-161 (APFFASNTTLVAYFFGKEL) traverse the membrane as a helical segment. Over 162 to 163 (WD) the chain is Cytoplasmic. The chain crosses the membrane as a helical span at residues 164-181 (TGAGLVAAVLIAICPGYI). Residues 182–192 (SRSVAGSYDNE) lie on the Lumenal side of the membrane. Positions 190 and 192 each coordinate Mn(2+). A DXD motif 2 motif is present at residues 190–192 (DNE). Residues 193 to 212 (AVAIFALLLTFYLFVKAVNT) traverse the membrane as a helical segment. The Cytoplasmic portion of the chain corresponds to 213–214 (GS). The chain crosses the membrane as a helical span at residues 215-229 (LAWALASAFGYFYMV). Residues 230–234 (SAWGG) are Lumenal-facing. The helical transmembrane segment at 235–251 (YVFIINLVPLYVLVLLI) threads the bilayer. At 252-256 (TGRYS) the chain is on the cytoplasmic side. The helical transmembrane segment at 257–282 (MRLYIAYNCMYILGMLLAMQIRFVGF) threads the bilayer. The Lumenal segment spans residues 283–290 (QHVQSGEH). Residues 291 to 310 (MGAMGVFLLMQVFYFLDWVK) traverse the membrane as a helical segment. Residues 311–326 (YQLNDTKLFQTFLRIT) lie on the Cytoplasmic side of the membrane. Residues 327–347 (VTSAILVGGVAVGVGTASGYI) traverse the membrane as a helical segment. Residues 348–380 (SPWTGRFYSLLDPTYAKDHIPIIASVSEHQPTA) are Lumenal-facing. The SVSE motif signature appears at 372-375 (SVSE). The chain crosses the membrane as a helical span at residues 381–403 (WSSFMFDYHILLFLFPAGLYFCF). The Cytoplasmic segment spans residues 404 to 409 (KRLTDA). Residues 410–426 (TIFIVMYGLTSLYFAGV) traverse the membrane as a helical segment. Over 427–430 (MVRL) the chain is Lumenal. Dolichyl diphosphooligosaccharide is bound at residue R429. The chain crosses the membrane as a helical span at residues 431–452 (ILVATPAVCLISAIAVSATIKN). The Cytoplasmic portion of the chain corresponds to 453–494 (LTSLLRTKQKVSQTGSTKGAGSSKASSKVTLDQSQPFQKNGA). Residues 495-515 (IALLVGVFYLLSRYAIHCTWV) traverse the membrane as a helical segment. Over 516 to 735 (TAEAYSSPSI…YRVKPPTNRL (220 aa)) the chain is Lumenal. The segment at 562 to 564 (WWD) is interacts with target acceptor peptide in protein substrate. A WWDYG motif motif is present at residues 562-566 (WWDYG). Y567 provides a ligand contact to dolichyl diphosphooligosaccharide. N-linked (GlcNAc...) asparagine glycosylation is found at N574 and N581. A glycan (N-linked (GlcNAc...) (high mannose) asparagine) is linked at N585. A DK motif motif is present at residues 629 to 636 (DINKFLWM).

The protein belongs to the STT3 family. As to quaternary structure, component of the oligosaccharyltransferase (OST) complex. Requires Mg(2+) as cofactor. Mn(2+) is required as a cofactor. In terms of tissue distribution, expressed preferentially in the root but also in the shoot.

Its subcellular location is the endoplasmic reticulum membrane. It carries out the reaction a di-trans,poly-cis-dolichyl diphosphooligosaccharide + L-asparaginyl-[protein] = N(4)-(oligosaccharide-(1-&gt;4)-N-acetyl-beta-D-glucosaminyl-(1-&gt;4)-N-acetyl-beta-D-glucosaminyl)-L-asparaginyl-[protein] + a di-trans,poly-cis-dolichyl diphosphate + H(+). It participates in protein modification; protein glycosylation. Its function is as follows. Catalytic subunit of the oligosaccharyl transferase (OST) complex that catalyzes the initial transfer of a defined glycan (Glc(3)Man(9)GlcNAc(2) in eukaryotes) from the lipid carrier dolichol-pyrophosphate to an asparagine residue within an Asn-X-Ser/Thr consensus motif in nascent polypeptide chains, the first step in protein N-glycosylation. N-glycosylation occurs cotranslationally and the complex associates with the Sec61 complex at the channel-forming translocon complex that mediates protein translocation across the endoplasmic reticulum (ER). All subunits are required for a maximal enzyme activity. This subunit contains the active site and the acceptor peptide and donor lipid-linked oligosaccharide (LLO) binding pockets. The chain is Dolichyl-diphosphooligosaccharide--protein glycosyltransferase subunit STT3B (STT3B) from Arabidopsis thaliana (Mouse-ear cress).